A 346-amino-acid polypeptide reads, in one-letter code: S-adenosylmethionine:tRNA ribosyltransferase-isomerase (346 aa).

The protein belongs to the QueA family. Monomer.

It localises to the cytoplasm. It carries out the reaction 7-aminomethyl-7-carbaguanosine(34) in tRNA + S-adenosyl-L-methionine = epoxyqueuosine(34) in tRNA + adenine + L-methionine + 2 H(+). The protein operates within tRNA modification; tRNA-queuosine biosynthesis. Transfers and isomerizes the ribose moiety from AdoMet to the 7-aminomethyl group of 7-deazaguanine (preQ1-tRNA) to give epoxyqueuosine (oQ-tRNA). The protein is S-adenosylmethionine:tRNA ribosyltransferase-isomerase of Lysinibacillus sphaericus (strain C3-41).